A 172-amino-acid polypeptide reads, in one-letter code: UPF0316 protein Clos_0555 (172 aa).

Transmembrane regions (helical) follow at residues 3–23, 34–54, and 61–81; these read ALLG…MATI, VIAA…IGKV, and PLNV…GIFL.

It belongs to the UPF0316 family.

The protein resides in the cell membrane. The polypeptide is UPF0316 protein Clos_0555 (Alkaliphilus oremlandii (strain OhILAs) (Clostridium oremlandii (strain OhILAs))).